Here is a 130-residue protein sequence, read N- to C-terminus: Anti-adapter protein IraD (130 aa).

The protein belongs to the GpW/Gp25 family. IraD subfamily. As to quaternary structure, interacts with RssB.

It localises to the cytoplasm. In terms of biological role, inhibits RpoS proteolysis by regulating RssB activity, thereby increasing the stability of the sigma stress factor RpoS during oxidative stress. Its effect on RpoS stability is due to its interaction with RssB, which probably blocks the interaction of RssB with RpoS, and the consequent delivery of the RssB-RpoS complex to the ClpXP protein degradation pathway. The protein is Anti-adapter protein IraD of Shigella boydii serotype 4 (strain Sb227).